A 542-amino-acid polypeptide reads, in one-letter code: Probable E3 ubiquitin-protein ligase ARI11 (542 aa).

Residues 1 to 25 (MSSSDRDIIDIESGEEDLYSDGGND) are disordered. The span at 10–19 (DIESGEEDLY) shows a compositional bias: acidic residues. Residues 135 to 342 (VDIQCGICFE…SDHKACNAFK (208 aa)) form a TRIAD supradomain region. 18 residues coordinate Zn(2+): cysteine 139, cysteine 142, cysteine 156, histidine 158, cysteine 161, cysteine 164, cysteine 184, cysteine 189, cysteine 228, cysteine 233, cysteine 251, cysteine 253, cysteine 258, cysteine 261, histidine 266, cysteine 271, cysteine 298, and cysteine 301. The RING-type 1 zinc-finger motif lies at 139–189 (CGICFESYTRKEIARVSCGHPYCKTCWTGYITTKIEDGPGCLRVKCPEPSC). The segment at 208 to 271 (DKYYRYFLRS…CEDAHSPVDC (64 aa)) adopts an IBR-type zinc-finger fold. An RING-type 2; atypical zinc finger spans residues 298-328 (CPKCKRPIEKNTGCNHMSCSAPCRHYFCWAC). The active site involves cysteine 311. Positions 316, 320, 325, 328, 335, and 338 each coordinate Zn(2+).

The protein belongs to the RBR family. Ariadne subfamily. Zn(2+) is required as a cofactor.

The enzyme catalyses [E2 ubiquitin-conjugating enzyme]-S-ubiquitinyl-L-cysteine + [acceptor protein]-L-lysine = [E2 ubiquitin-conjugating enzyme]-L-cysteine + [acceptor protein]-N(6)-ubiquitinyl-L-lysine.. Its pathway is protein modification; protein ubiquitination. Might act as an E3 ubiquitin-protein ligase, or as part of E3 complex, which accepts ubiquitin from specific E2 ubiquitin-conjugating enzymes and then transfers it to substrates. The sequence is that of Probable E3 ubiquitin-protein ligase ARI11 (ARI11) from Arabidopsis thaliana (Mouse-ear cress).